Reading from the N-terminus, the 235-residue chain is CD-NTase-associated protein 13 (235 aa).

A run of 2 helical transmembrane segments spans residues I14–I34 and I45–L65.

The protein in the C-terminal section; belongs to the bacterial STING family. As to quaternary structure, homodimer.

Its subcellular location is the cell inner membrane. Functionally, effector protein of a CBASS antivirus system. CBASS (cyclic oligonucleotide-based antiphage signaling system) provides immunity against bacteriophage. The CD-NTase protein synthesizes cyclic nucleotides in response to infection; these serve as specific second messenger signals. The signals activate a diverse range of effectors, leading to bacterial cell death and thus abortive phage infection. A type I-D(GG) CBASS system. In terms of biological role, binds cyclic dinucleotides: binds c-di-GMP (synthesized by the cognate CdnE encoded upstream in the same operon), cyclic 3'3'-cyclic GMP-AMP (3'3'-cGAMP) but not cUMP-AMP. The effector protein for this CBASS system, its activity is stimulated by c-di-GMP and leads to cell death. This is CD-NTase-associated protein 13 from Flavobacteriaceae sp. genome_bin_11.